Here is a 513-residue protein sequence, read N- to C-terminus: Cytochrome P450 monooxygenase sthF (513 aa).

2 consecutive transmembrane segments (helical) span residues 13–33 (FPSLHRIIISTFALIAAYIFI) and 212–232 (MLHPWLQLVFANIYITHIILL). C452 serves as a coordination point for heme.

The protein belongs to the cytochrome P450 family. Heme is required as a cofactor.

It is found in the membrane. It carries out the reaction dehydroprobetaenone I + NADPH + O2 + H(+) = epoxybetaenone + NADP(+) + H2O. The enzyme catalyses dehydroprobetaenone I + 3 NADPH + 3 O2 + 3 H(+) = betaenone C + 3 NADP(+) + 3 H2O. The catalysed reaction is probetaenone I + 3 NADPH + 3 O2 + 3 H(+) = betaenone B + 3 NADP(+) + 3 H2O. Its pathway is mycotoxin biosynthesis. Cytochrome P450 monooxygenase; part of the gene cluster that mediates the biosynthesis of the phytotoxin stemphyloxin II. The first step of the pathway is the synthesis of dehydroprobetaenone I by the polyketide synthase sthA and the enoyl reductase sthE via condensation of one acetyl-CoA starter unit with 7 malonyl-CoA units and 5 methylations. The C-terminal reductase (R) domain of sthA catalyzes the reductive release of the polyketide chain. Because sthA lacks a designated enoylreductase (ER) domain, the required activity is provided the enoyl reductase sthE. The short-chain dehydrogenase/reductase sthC then catalyzes reduction of dehydroprobetaenone I to probetaenone I. The cytochrome P450 monooxygenase sthF catalyzes successive epoxidation, oxidation (resulting from epoxide opening) and hydroxylation to install a tertiary alcohol in the decaline ring to yield betaenone C from dehydroprobetaenone I and betaenone B from probetaenone I. The FAD-linked oxidoreductase sthB is responsible for the conversion of betaenone C to betaenone A via an intramolecular aldol reaction between C-1 and C-17 to form the bridged tricyclic system in betaenone A. Finally, the cytochrome P450 monooxygenase sthD catalyzes the hydroxylation of C-15 to afford the final metabolite stemphyloxin II. In Phaeosphaeria nodorum (strain SN15 / ATCC MYA-4574 / FGSC 10173) (Glume blotch fungus), this protein is Cytochrome P450 monooxygenase sthF.